The primary structure comprises 321 residues: uncharacterized protein (321 aa).

Residues 1–56 (MANIKDIAEKAGVSVTTVSRVINNHPYVSEDKRKRVFEAMESLEYTRNIHAVHLSK) form the HTH lacI-type domain. Residues 4–23 (IKDIAEKAGVSVTTVSRVIN) constitute a DNA-binding region (H-T-H motif).

This is an uncharacterized protein from Bacillus subtilis (strain 168).